Reading from the N-terminus, the 165-residue chain is Phosphopantetheine adenylyltransferase (165 aa).

Serine 10 is a substrate binding site. Residues 10–11 (SF) and histidine 18 each bind ATP. Positions 42, 79, and 93 each coordinate substrate. ATP is bound by residues 94–96 (GLR), glutamate 104, and 129–135 (VRPITAT).

The protein belongs to the bacterial CoaD family. Homohexamer. Mg(2+) serves as cofactor.

Its subcellular location is the cytoplasm. It carries out the reaction (R)-4'-phosphopantetheine + ATP + H(+) = 3'-dephospho-CoA + diphosphate. It functions in the pathway cofactor biosynthesis; coenzyme A biosynthesis; CoA from (R)-pantothenate: step 4/5. In terms of biological role, reversibly transfers an adenylyl group from ATP to 4'-phosphopantetheine, yielding dephospho-CoA (dPCoA) and pyrophosphate. The polypeptide is Phosphopantetheine adenylyltransferase (Nitrobacter winogradskyi (strain ATCC 25391 / DSM 10237 / CIP 104748 / NCIMB 11846 / Nb-255)).